We begin with the raw amino-acid sequence, 426 residues long: Probable serine/threonine-protein kinase PBL2 (426 aa).

The segment at 1–54 (MGNCLDSSAKVDNSNHSPHANSASSGSKVSSKTSRSTGPSGLSTTSYSTDSSFG) is disordered. The N-myristoyl glycine moiety is linked to residue glycine 2. The S-palmitoyl cysteine moiety is linked to residue cysteine 4. Residues 14 to 38 (SNHSPHANSASSGSKVSSKTSRSTG) show a composition bias toward low complexity. Over residues 39 to 52 (PSGLSTTSYSTDSS) the composition is skewed to polar residues. Threonine 75 is subject to Phosphothreonine. One can recognise a Protein kinase domain in the interval 86–369 (FRQDNLLGEG…SEVLVTLEQL (284 aa)). ATP contacts are provided by residues 92–100 (LGEGGFGCV) and lysine 124. Tyrosine 169 carries the post-translational modification Phosphotyrosine. The Proton acceptor role is filled by aspartate 219. Serine 253 is subject to O-UMP-serine. Serine 253 is subject to Phosphoserine. Phosphothreonine is present on residues threonine 254 and threonine 259. O-UMP-threonine is present on threonine 254. The residue at position 267 (tyrosine 267) is a Phosphotyrosine. A disordered region spans residues 374 to 426 (KPGTKHTQMESPRFHHSSVMQKSPVRYSHDRPLLHMTPGASPLPSYTQSPRVR). Over residues 417–426 (PSYTQSPRVR) the composition is skewed to polar residues.

Belongs to the protein kinase superfamily. Ser/Thr protein kinase family. Interacts with FLS2. Interacts with the Xanthomonas campestris effector XopAC/AvrAC; the recognition of X.campestris effector XopAC/AvrAC requires the presence of RKS1 and RPP13L4/ZAR1. Component of a stable high-order oligomeric complex made of RKS1 and RPP13L4/ZAR1 which recruits X.campestris effector XopAC/AvrAC-mediated uridylylated PBL2 in the presence of ATP to form a wheel-like pentameric resistosome; this complex triggers immunity toward X.campestris in vascular tissues. Binds to RKS1 when uridylylated. Post-translationally, uridylylated at Ser-253 and Thr-254 by Xanthomonas campestris effector AvrAC/XopAC; this uridylylation is necessary for specific recruitment to RKS1 and to trigger immunity. In terms of tissue distribution, strongly expressed in leaves, moderately in roots, and barely in flowers, mostly in pedicels.

The protein resides in the cell membrane. Its subcellular location is the nucleus. It carries out the reaction L-seryl-[protein] + ATP = O-phospho-L-seryl-[protein] + ADP + H(+). The enzyme catalyses L-threonyl-[protein] + ATP = O-phospho-L-threonyl-[protein] + ADP + H(+). Involved in disease resistance signaling. Contributes to pathogen-associated molecular pattern (PAMP)-triggered immunity (PTI) signaling and defense responses downstream of FLS2. Acts as a BIK1 decoy and enables Xanthomonas campestris AvrAC/XopAC detection; X.campestris effector AvrAC/XopAC-mediated uridylylation promotes the formation of a complex with RKS1 and RPP13L4/ZAR1 which, in turn, activates effector-triggered immunity (ETI) against X.campestris. Promotes, when uridylylated by AvrAC/XopAC, the release of ADP from the inactive RKS1-ZAR1 complex, thus activating the resistosome. The chain is Probable serine/threonine-protein kinase PBL2 from Arabidopsis thaliana (Mouse-ear cress).